The following is a 558-amino-acid chain: Formate--tetrahydrofolate ligase (558 aa).

66–73 (TPAGEGKT) serves as a coordination point for ATP.

It belongs to the formate--tetrahydrofolate ligase family.

It catalyses the reaction (6S)-5,6,7,8-tetrahydrofolate + formate + ATP = (6R)-10-formyltetrahydrofolate + ADP + phosphate. Its pathway is one-carbon metabolism; tetrahydrofolate interconversion. The chain is Formate--tetrahydrofolate ligase from Neisseria meningitidis serogroup A / serotype 4A (strain DSM 15465 / Z2491).